Here is a 387-residue protein sequence, read N- to C-terminus: Lipid-A-disaccharide synthase (387 aa).

This sequence belongs to the LpxB family.

It catalyses the reaction a lipid X + a UDP-2-N,3-O-bis[(3R)-3-hydroxyacyl]-alpha-D-glucosamine = a lipid A disaccharide + UDP + H(+). Its pathway is bacterial outer membrane biogenesis; LPS lipid A biosynthesis. Condensation of UDP-2,3-diacylglucosamine and 2,3-diacylglucosamine-1-phosphate to form lipid A disaccharide, a precursor of lipid A, a phosphorylated glycolipid that anchors the lipopolysaccharide to the outer membrane of the cell. The protein is Lipid-A-disaccharide synthase of Nitrosococcus oceani (strain ATCC 19707 / BCRC 17464 / JCM 30415 / NCIMB 11848 / C-107).